We begin with the raw amino-acid sequence, 332 residues long: Isopentenyl phosphate kinase (332 aa).

Residue Met-1 is modified to N-acetylmethionine. Residue 18 to 22 (KLGGA) coordinates ATP. Position 96 (Ala-96) interacts with substrate. Gly-97 contributes to the ATP binding site. His-101 and Gly-202 together coordinate substrate. Residues Asp-223, 228–233 (YDRPPS), Gly-279, and Lys-283 each bind ATP.

Belongs to the isopentenyl phosphate kinase family.

It is found in the cytoplasm. The protein resides in the cytosol. The enzyme catalyses isopentenyl phosphate + ATP = isopentenyl diphosphate + ADP. Its function is as follows. Catalyzes the formation of isopentenyl diphosphate (IPP), the universal five-carbon isoprenoid building block of all natural isoprenoids. Acts in parallel with the mevalonate (MVA) pathway and plays an important role in regulating the formation of both MVA and methylerythritol phosphate (MEP) pathway-derived terpenoid compounds by controlling the ratio of isopentenyl phosphate (IP) and dimethylallyl phosphate (DMAP) to isopentenyl diphosphate (IPP) and dimethylallyl diphosphate (DMAPP). Controls the levels of IP and DMAP that are competitive inhibitors of the farnesyl diphosphate synthase. Regulates the production of farnesyl diphosphate-derived terpenoids in the cytosol, and geranyl diphosphate-derived compounds in plastids. The chain is Isopentenyl phosphate kinase from Arabidopsis thaliana (Mouse-ear cress).